Here is a 572-residue protein sequence, read N- to C-terminus: Probable D-xylulose kinase A (572 aa).

Residues H95, R166, D282, and N283 each contribute to the substrate site. ATP is bound by residues W365, 470-471 (GG), and N474.

The protein belongs to the FGGY kinase family.

It localises to the cytoplasm. The enzyme catalyses D-xylulose + ATP = D-xylulose 5-phosphate + ADP + H(+). Functionally, highly specific D-xylulose kinase which participates in the catabolism of xylose. Xylose is a major component of hemicelluloses such as xylan. Most fungi utilize D-xylose via three enzymatic reactions, xylose reductase (XR), xylitol dehydrogenase (XDH), and xylulokinase, to form xylulose 5-phosphate, which enters pentose phosphate pathway. This is Probable D-xylulose kinase A (xkiA) from Aspergillus oryzae (strain ATCC 42149 / RIB 40) (Yellow koji mold).